The sequence spans 83 residues: MTSNNFGDANHQLDAIGLRCPEPVMMVRLSIRNMQLGETLAISADDHSTTRDIPSFCRFMGHTLIASDVDSKPYRYLIRKDQS.

The active-site Cysteine persulfide intermediate is the Cys20.

The protein belongs to the sulfur carrier protein TusA family.

It localises to the cytoplasm. Functionally, sulfur carrier protein which probably makes part of a sulfur-relay system. The chain is Sulfur carrier protein TusA from Pseudoalteromonas atlantica (strain T6c / ATCC BAA-1087).